A 310-amino-acid polypeptide reads, in one-letter code: MILTLTLNPSVDISYPLTALKLDDVNRVQEVSKTAGGKGLNVTRVLAQVGEPVLASGFIGGELGQFIAKKLDHAGIKHAFYNIKGETRNCIAILHEGQQTEILEQGPEIDNQEAAGFIKHFEQLLEKVEAVAISGSLPKGLNQDYYAQIIERCQNKGVPVILDCSGATLQTVLENPYKPTVIKPNISELYQLLNQPLDESLESLKQAVSQPLFEGIEWIIVSLGAQGAFAKHNHTFYRVNIPKISVLNPVGSGDSTVAGITSAILNHENDHDLLKKANTLGMLNAQEAQTGYVNLNNYDDLFNQIEVLEV.

The protein belongs to the carbohydrate kinase PfkB family. LacC subfamily.

It catalyses the reaction D-tagatofuranose 6-phosphate + ATP = D-tagatofuranose 1,6-bisphosphate + ADP + H(+). Its pathway is carbohydrate metabolism; D-tagatose 6-phosphate degradation; D-glyceraldehyde 3-phosphate and glycerone phosphate from D-tagatose 6-phosphate: step 1/2. The sequence is that of Tagatose-6-phosphate kinase from Staphylococcus aureus (strain MRSA252).